The primary structure comprises 210 residues: Nucleoside triphosphate pyrophosphatase (210 aa).

Catalysis depends on Asp-79, which acts as the Proton acceptor.

This sequence belongs to the Maf family. It depends on a divalent metal cation as a cofactor.

Its subcellular location is the cytoplasm. It catalyses the reaction a ribonucleoside 5'-triphosphate + H2O = a ribonucleoside 5'-phosphate + diphosphate + H(+). It carries out the reaction a 2'-deoxyribonucleoside 5'-triphosphate + H2O = a 2'-deoxyribonucleoside 5'-phosphate + diphosphate + H(+). Nucleoside triphosphate pyrophosphatase. May have a dual role in cell division arrest and in preventing the incorporation of modified nucleotides into cellular nucleic acids. In Mycolicibacterium paratuberculosis (strain ATCC BAA-968 / K-10) (Mycobacterium paratuberculosis), this protein is Nucleoside triphosphate pyrophosphatase.